Reading from the N-terminus, the 312-residue chain is Ribosomal protein L11 methyltransferase (312 aa).

The S-adenosyl-L-methionine site is built by Thr-159, Gly-180, Asp-201, and Asn-244.

Belongs to the methyltransferase superfamily. PrmA family.

It is found in the cytoplasm. It catalyses the reaction L-lysyl-[protein] + 3 S-adenosyl-L-methionine = N(6),N(6),N(6)-trimethyl-L-lysyl-[protein] + 3 S-adenosyl-L-homocysteine + 3 H(+). Functionally, methylates ribosomal protein L11. The sequence is that of Ribosomal protein L11 methyltransferase from Desulfitobacterium hafniense (strain DSM 10664 / DCB-2).